The sequence spans 92 residues: Large ribosomal subunit protein eL43 (92 aa).

The C4-type zinc-finger motif lies at 39–60 (CDFCGKYGMKRQAVGIWCCKGC).

This sequence belongs to the eukaryotic ribosomal protein eL43 family.

The polypeptide is Large ribosomal subunit protein eL43 (RPL37a) (Ostreococcus tauri).